The following is a 67-amino-acid chain: Large ribosomal subunit protein uL29 (67 aa).

The protein belongs to the universal ribosomal protein uL29 family.

In Staphylothermus marinus (strain ATCC 43588 / DSM 3639 / JCM 9404 / F1), this protein is Large ribosomal subunit protein uL29.